A 2542-amino-acid chain; its full sequence is Probable polyketide synthase 41 (2542 aa).

A Ketosynthase family 3 (KS3) domain is found at 11–441; that stretch reads CNKVAIIGIG…GSNCCLIVSS (431 aa). Residues Cys-177, His-318, and His-360 each act as for beta-ketoacyl synthase activity in the active site. An acyl/malonyl transferase region spans residues 628 to 661; it reads GIKPSIIVGHSLGEISSSYCSGMIDLDTFCYLIY. Ser-638 functions as the For acyl/malonyl transferase activity in the catalytic mechanism. Residues 926–1059 are N-terminal hotdog fold; that stretch reads INHLGISNSN…ANFQLFSRGP (134 aa). Positions 926–1231 constitute a PKS/mFAS DH domain; that stretch reads INHLGISNSN…FKSTTKIKDP (306 aa). The Proton acceptor; for dehydratase activity role is filled by His-959. The C-terminal hotdog fold stretch occupies residues 1083 to 1231; sequence NLTKLSKQEL…FKSTTKIKDP (149 aa). The Proton donor; for dehydratase activity role is filled by Asp-1145. Positions 2459 to 2537 constitute a Carrier domain; sequence NVELTVDQLI…SFIQLVKNSM (79 aa). Ser-2496 is modified (O-(pantetheine 4'-phosphoryl)serine).

Requires pantetheine 4'-phosphate as cofactor.

Functionally, probable polyketide synthase. This is Probable polyketide synthase 41 (pks41) from Dictyostelium discoideum (Social amoeba).